A 294-amino-acid chain; its full sequence is Ribosomal protein L11 methyltransferase (294 aa).

Residues Thr-144, Gly-165, Asp-187, and Asn-229 each coordinate S-adenosyl-L-methionine.

The protein belongs to the methyltransferase superfamily. PrmA family.

Its subcellular location is the cytoplasm. It catalyses the reaction L-lysyl-[protein] + 3 S-adenosyl-L-methionine = N(6),N(6),N(6)-trimethyl-L-lysyl-[protein] + 3 S-adenosyl-L-homocysteine + 3 H(+). Functionally, methylates ribosomal protein L11. This chain is Ribosomal protein L11 methyltransferase, found in Pseudomonas aeruginosa (strain LESB58).